The chain runs to 216 residues: Somatotropin (216 aa).

The N-terminal stretch at 1–26 (MAAGPRTSVLLAFGLLCLPWPQDVGA) is a signal peptide. Histidine 45 is a binding site for Zn(2+). Cysteine 78 and cysteine 189 are joined by a disulfide. Serine 131 carries the phosphoserine modification. Glutamate 198 provides a ligand contact to Zn(2+). A disulfide bond links cysteine 206 and cysteine 214.

Belongs to the somatotropin/prolactin family.

It localises to the secreted. Its function is as follows. Plays an important role in growth control. Its major role in stimulating body growth is to stimulate the liver and other tissues to secrete IGF1. It stimulates both the differentiation and proliferation of myoblasts. It also stimulates amino acid uptake and protein synthesis in muscle and other tissues. This is Somatotropin (GH1) from Equus caballus (Horse).